The following is a 300-amino-acid chain: Protoheme IX farnesyltransferase (300 aa).

Transmembrane regions (helical) follow at residues 20 to 40 (ITKM…YFLG), 43 to 63 (TIDF…VGAS), 94 to 114 (PVAF…LYVI), 116 to 136 (PKTA…YTPL), 142 to 162 (LSVF…WVAA), 173 to 193 (LFMI…WWLF), 215 to 235 (IQII…VFGV), 241 to 261 (LTPV…YYAI), and 276 to 296 (MFAS…DKFI).

Belongs to the UbiA prenyltransferase family. Protoheme IX farnesyltransferase subfamily.

The protein localises to the cell membrane. It catalyses the reaction heme b + (2E,6E)-farnesyl diphosphate + H2O = Fe(II)-heme o + diphosphate. Its pathway is porphyrin-containing compound metabolism; heme O biosynthesis; heme O from protoheme: step 1/1. Converts heme B (protoheme IX) to heme O by substitution of the vinyl group on carbon 2 of heme B porphyrin ring with a hydroxyethyl farnesyl side group. The sequence is that of Protoheme IX farnesyltransferase from Christiangramia forsetii (strain DSM 17595 / CGMCC 1.15422 / KT0803) (Gramella forsetii).